The primary structure comprises 186 residues: Mating-type-like protein ALPHA2 (186 aa).

Residues 108-170 (ASYRGHRFTR…NRRRKQKSIY (63 aa)) constitute a DNA-binding region (homeobox; TALE-type).

Belongs to the TALE/M-ATYP homeobox family.

The protein localises to the nucleus. Functionally, mating type proteins are sequence specific DNA-binding proteins that act as master switches in yeast differentiation by controlling gene expression in a cell type-specific fashion. The protein is Mating-type-like protein ALPHA2 (MTL1ALPHA2) of Candida glabrata (strain ATCC 2001 / BCRC 20586 / JCM 3761 / NBRC 0622 / NRRL Y-65 / CBS 138) (Yeast).